The chain runs to 132 residues: Small ribosomal subunit protein uS8 (132 aa).

This sequence belongs to the universal ribosomal protein uS8 family. In terms of assembly, part of the 30S ribosomal subunit. Contacts proteins S5 and S12.

Functionally, one of the primary rRNA binding proteins, it binds directly to 16S rRNA central domain where it helps coordinate assembly of the platform of the 30S subunit. The protein is Small ribosomal subunit protein uS8 of Geobacillus thermodenitrificans (strain NG80-2).